The following is a 189-amino-acid chain: ATP synthase subunit delta (189 aa).

It belongs to the ATPase delta chain family. F-type ATPases have 2 components, F(1) - the catalytic core - and F(0) - the membrane proton channel. F(1) has five subunits: alpha(3), beta(3), gamma(1), delta(1), epsilon(1). F(0) has three main subunits: a(1), b(2) and c(10-14). The alpha and beta chains form an alternating ring which encloses part of the gamma chain. F(1) is attached to F(0) by a central stalk formed by the gamma and epsilon chains, while a peripheral stalk is formed by the delta and b chains.

It localises to the cell inner membrane. Its function is as follows. F(1)F(0) ATP synthase produces ATP from ADP in the presence of a proton or sodium gradient. F-type ATPases consist of two structural domains, F(1) containing the extramembraneous catalytic core and F(0) containing the membrane proton channel, linked together by a central stalk and a peripheral stalk. During catalysis, ATP synthesis in the catalytic domain of F(1) is coupled via a rotary mechanism of the central stalk subunits to proton translocation. Functionally, this protein is part of the stalk that links CF(0) to CF(1). It either transmits conformational changes from CF(0) to CF(1) or is implicated in proton conduction. The chain is ATP synthase subunit delta from Ehrlichia ruminantium (strain Gardel).